The chain runs to 241 residues: MFLEKEQDNLDNLKTQTKELHKDYTECQNCQKEETQTTNKDNQKEDETFKNQPNKTKQTNTKQQKHLSKESSHQQITKLQTQIKELQQKLSQQKKTFDEGLLKNQAEFINFKKRAQTQKENELKYASSNFINNLLMPLEQLEKVIDMPTQNELLQKYLLGFKLLQKQIKKVLQDEGVEEIEALNKPFDPTFHHALETVCDFEKPDKTNLAVLQKGYLYKKRILRPTLVKVNEWSDKNEKNE.

The span at 28–49 (QNCQKEETQTTNKDNQKEDETF) shows a compositional bias: basic and acidic residues. The disordered stretch occupies residues 28 to 78 (QNCQKEETQTTNKDNQKEDETFKNQPNKTKQTNTKQQKHLSKESSHQQITK). The segment covering 50–62 (KNQPNKTKQTNTK) has biased composition (low complexity).

It belongs to the GrpE family. As to quaternary structure, homodimer.

The protein resides in the cytoplasm. Its function is as follows. Participates actively in the response to hyperosmotic and heat shock by preventing the aggregation of stress-denatured proteins, in association with DnaK and GrpE. It is the nucleotide exchange factor for DnaK and may function as a thermosensor. Unfolded proteins bind initially to DnaJ; upon interaction with the DnaJ-bound protein, DnaK hydrolyzes its bound ATP, resulting in the formation of a stable complex. GrpE releases ADP from DnaK; ATP binding to DnaK triggers the release of the substrate protein, thus completing the reaction cycle. Several rounds of ATP-dependent interactions between DnaJ, DnaK and GrpE are required for fully efficient folding. The polypeptide is Protein GrpE (Aster yellows witches'-broom phytoplasma (strain AYWB)).